The primary structure comprises 470 residues: ATP synthase subunit beta (470 aa).

Gly157–Thr164 contacts ATP.

Belongs to the ATPase alpha/beta chains family. F-type ATPases have 2 components, CF(1) - the catalytic core - and CF(0) - the membrane proton channel. CF(1) has five subunits: alpha(3), beta(3), gamma(1), delta(1), epsilon(1). CF(0) has three main subunits: a(1), b(2) and c(9-12). The alpha and beta chains form an alternating ring which encloses part of the gamma chain. CF(1) is attached to CF(0) by a central stalk formed by the gamma and epsilon chains, while a peripheral stalk is formed by the delta and b chains.

It localises to the cell inner membrane. It carries out the reaction ATP + H2O + 4 H(+)(in) = ADP + phosphate + 5 H(+)(out). Produces ATP from ADP in the presence of a proton gradient across the membrane. The catalytic sites are hosted primarily by the beta subunits. This Geobacter metallireducens (strain ATCC 53774 / DSM 7210 / GS-15) protein is ATP synthase subunit beta.